The primary structure comprises 310 residues: Elongation factor Ts (310 aa).

Positions 80-83 (TDFV) are involved in Mg(2+) ion dislocation from EF-Tu.

This sequence belongs to the EF-Ts family.

It localises to the cytoplasm. Associates with the EF-Tu.GDP complex and induces the exchange of GDP to GTP. It remains bound to the aminoacyl-tRNA.EF-Tu.GTP complex up to the GTP hydrolysis stage on the ribosome. This chain is Elongation factor Ts, found in Beijerinckia indica subsp. indica (strain ATCC 9039 / DSM 1715 / NCIMB 8712).